A 477-amino-acid chain; its full sequence is Methylenetetrahydrofolate--tRNA-(uracil-5-)-methyltransferase TrmFO (477 aa).

An FAD-binding site is contributed by 15–20; it reads GAGLAG.

This sequence belongs to the MnmG family. TrmFO subfamily. Requires FAD as cofactor.

The protein resides in the cytoplasm. It catalyses the reaction uridine(54) in tRNA + (6R)-5,10-methylene-5,6,7,8-tetrahydrofolate + NADH + H(+) = 5-methyluridine(54) in tRNA + (6S)-5,6,7,8-tetrahydrofolate + NAD(+). The enzyme catalyses uridine(54) in tRNA + (6R)-5,10-methylene-5,6,7,8-tetrahydrofolate + NADPH + H(+) = 5-methyluridine(54) in tRNA + (6S)-5,6,7,8-tetrahydrofolate + NADP(+). Catalyzes the folate-dependent formation of 5-methyl-uridine at position 54 (M-5-U54) in all tRNAs. The chain is Methylenetetrahydrofolate--tRNA-(uracil-5-)-methyltransferase TrmFO from Nitrobacter winogradskyi (strain ATCC 25391 / DSM 10237 / CIP 104748 / NCIMB 11846 / Nb-255).